We begin with the raw amino-acid sequence, 398 residues long: Thyrotropin-releasing hormone receptor (398 aa).

Residues 1–28 are Extracellular-facing; it reads MENETVSELNQTQLQPRAVVALEYQVVT. N-linked (GlcNAc...) asparagine glycosylation is found at N3 and N10. Residues 29–51 traverse the membrane as a helical segment; sequence ILLVLIICGLGIVGNIMVVLVVM. At 52–61 the chain is on the cytoplasmic side; that stretch reads RTKHMRTPTN. A helical transmembrane segment spans residues 62-83; it reads CYLVSLAVADLMVLVAAGLPNI. The Extracellular segment spans residues 84-99; the sequence is TDSIYGSWVYGYVGCL. C98 and C179 are disulfide-bonded. A helical membrane pass occupies residues 100–121; that stretch reads CITYLQYLGINASSCSITAFTI. Residues 122–144 lie on the Cytoplasmic side of the membrane; it reads ERYIAICHPIKAQFLCTFSRAKK. Residues 145 to 168 traverse the membrane as a helical segment; that stretch reads IIIFVWAFTSLYCMLWFFLLDLNI. The Extracellular portion of the chain corresponds to 169–193; sequence STYKDAIVISCGYKISRNYYSPIYL. The chain crosses the membrane as a helical span at residues 194-215; the sequence is MDFGVFYVVPMILATVLYGFIA. At 216 to 266 the chain is on the cytoplasmic side; it reads RILFLNPIPSDPKENSKTWKNDSTHQNTNLNVNTSNRCFNSTVSSRKQVTK. A helical membrane pass occupies residues 267-288; that stretch reads MLAVVVILFALLWMPYRTLVVV. Residues 289–296 are Extracellular-facing; the sequence is NSFLSSPF. Residues 297-319 traverse the membrane as a helical segment; the sequence is QENWFLLFCRICIYLNSAINPVI. At 320–398 the chain is on the cytoplasmic side; the sequence is YNLMSQKFRA…LASEVSFSQS (79 aa).

This sequence belongs to the G-protein coupled receptor 1 family.

It localises to the cell membrane. Functionally, receptor for thyrotropin-releasing hormone (TRH). Upon ligand binding, this G-protein-coupled receptor triggers activation of the phosphatidylinositol (IP3)-calcium-protein kinase C (PKC) pathway. The protein is Thyrotropin-releasing hormone receptor (TRHR) of Homo sapiens (Human).